A 296-amino-acid chain; its full sequence is Iron(3+)-hydroxamate-binding protein FhuD (296 aa).

A signal peptide (tat-type signal) is located at residues 1-30 (MSGLPLISRRRLLTAMALSPLLWQMNTAHA). Residues 37-296 (RIVALEWLPV…VLDNAIGGKA (260 aa)) enclose the Fe/B12 periplasmic-binding domain. Residues tryptophan 68, arginine 84, serine 103, tyrosine 106, phenylalanine 124, tryptophan 217, tryptophan 273, phenylalanine 274, and tyrosine 275 each coordinate Fe(III)-coprogen.

Belongs to the bacterial solute-binding protein 8 family. In terms of assembly, the complex is composed of two ATP-binding proteins (FhuC), a transmembrane protein (FhuB) and a solute-binding protein (FhuD). FhuD interacts with FhuB. Substrate-loaded FhuD binds FhuB more strongly than FhuD alone. Exported by the Tat system. The position of the signal peptide cleavage has been experimentally proven. Can also be exported by the Sec system.

Its subcellular location is the periplasm. Its function is as follows. Part of the ABC transporter complex FhuCDB involved in iron(3+)-hydroxamate import. Binds the iron(3+)-hydroxamate complex and transfers it to the membrane-bound permease. Required for the transport of all iron(3+)-hydroxamate siderophores such as ferrichrome, gallichrome, desferrioxamine, coprogen, aerobactin, shizokinen, rhodotorulic acid and the antibiotic albomycin. The chain is Iron(3+)-hydroxamate-binding protein FhuD (fhuD) from Escherichia coli (strain K12).